The chain runs to 352 residues: Mitochondrial ubiquitin ligase activator of NFKB 1 (352 aa).

The Cytoplasmic segment spans residues 1–8 (MENGGRPS). Residues 9–29 (LCQFILLGTTSVVTAALYSVY) traverse the membrane as a helical segment. Over 30–238 (RQKAWVSQEL…LLQRQESSVR (209 aa)) the chain is Mitochondrial intermembrane. Residue Lys52 forms a Glycyl lysine isopeptide (Lys-Gly) (interchain with G-Cter in ubiquitin) linkage. A helical membrane pass occupies residues 239 to 259 (LWKVLALVFGFATCATLFFIL). Topologically, residues 260 to 352 (RKQYLQRQER…ITRVIPLYNS (93 aa)) are cytoplasmic. Residues Lys273 and Lys299 each participate in a glycyl lysine isopeptide (Lys-Gly) (interchain with G-Cter in ubiquitin) cross-link. The RING-type zinc finger occupies 302–340 (CVVCLSSFKSCVFLECGHVCSCTECYRALPEPKKCPICR).

Homooligomer. Interacts with MAP3K7/TAK1. Interacts with UBC9. Interacts with and sumoylates DNM1L. Interacts with MAVS. Interacts with TP53 (via N-terminus); the interaction leads to ubiquitination and proteasomal degradation of TP53. Post-translationally, ubiquitinated by PRKN during mitophagy, leading to its degradation and enhancement of mitophagy. Deubiquitinated by USP30.

The protein localises to the mitochondrion outer membrane. The protein resides in the peroxisome. It carries out the reaction S-ubiquitinyl-[E2 ubiquitin-conjugating enzyme]-L-cysteine + [acceptor protein]-L-lysine = [E2 ubiquitin-conjugating enzyme]-L-cysteine + N(6)-ubiquitinyl-[acceptor protein]-L-lysine.. It functions in the pathway protein modification; protein ubiquitination. The protein operates within protein modification; protein sumoylation. Its function is as follows. Exhibits weak E3 ubiquitin-protein ligase activity. E3 ubiquitin ligases accept ubiquitin from an E2 ubiquitin-conjugating enzyme in the form of a thioester and then directly transfer the ubiquitin to targeted substrates. Can ubiquitinate AKT1 preferentially at 'Lys-284' involving 'Lys-48'-linked polyubiquitination and seems to be involved in regulation of Akt signaling by targeting phosphorylated Akt to proteasomal degradation. Mediates polyubiquitination of cytoplasmic TP53 at 'Lys-24' which targets TP53 for proteasomal degradation, thus reducing TP53 levels in the cytoplasm and mitochondrion. Proposed to preferentially act as a SUMO E3 ligase at physiological concentrations. Plays a role in the control of mitochondrial morphology by promoting mitochondrial fragmentation, and influences mitochondrial localization. Likely to promote mitochondrial fission through negatively regulating the mitochondrial fusion proteins MFN1 and MFN2, acting in a pathway that is parallel to the PRKN/PINK1 regulatory pathway. May also be involved in the sumoylation of the membrane fission protein DNM1L. Inhibits cell growth. When overexpressed, activates JNK through MAP3K7/TAK1 and induces caspase-dependent apoptosis. Involved in the modulation of innate immune defense against viruses by inhibiting RIGI-dependent antiviral response. Can mediate RIGI sumoylation and disrupt its polyubiquitination. The polypeptide is Mitochondrial ubiquitin ligase activator of NFKB 1 (MUL1) (Macaca fascicularis (Crab-eating macaque)).